Consider the following 205-residue polypeptide: Recombination protein RecR (205 aa).

The C4-type zinc-finger motif lies at Cys-64–Cys-79. Positions Arg-87 to Pro-182 constitute a Toprim domain.

The protein belongs to the RecR family.

In terms of biological role, may play a role in DNA repair. It seems to be involved in an RecBC-independent recombinational process of DNA repair. It may act with RecF and RecO. The protein is Recombination protein RecR of Roseiflexus castenholzii (strain DSM 13941 / HLO8).